The following is a 633-amino-acid chain: tRNA uridine 5-carboxymethylaminomethyl modification enzyme MnmG (633 aa).

An FAD-binding site is contributed by 13–18 (GGGHAG). Position 273–287 (273–287 (GPRYCPSIEDKINRF)) interacts with NAD(+).

The protein belongs to the MnmG family. Homodimer. Heterotetramer of two MnmE and two MnmG subunits. It depends on FAD as a cofactor.

It is found in the cytoplasm. In terms of biological role, NAD-binding protein involved in the addition of a carboxymethylaminomethyl (cmnm) group at the wobble position (U34) of certain tRNAs, forming tRNA-cmnm(5)s(2)U34. The sequence is that of tRNA uridine 5-carboxymethylaminomethyl modification enzyme MnmG from Pseudoalteromonas atlantica (strain T6c / ATCC BAA-1087).